A 529-amino-acid chain; its full sequence is Phospholipase A1-Igamma2, chloroplastic (529 aa).

The N-terminal 43 residues, 1–43 (MAAIPSHNNLLTINHKNSITGSSSLNTNFSEINFPAKFRVATR), are a transit peptide targeting the chloroplast. Positions 316 to 320 (GHSLG) match the GXSXG motif. Catalysis depends on S318, which acts as the Acyl-ester intermediate. Catalysis depends on charge relay system residues D381 and H437.

The protein belongs to the AB hydrolase superfamily. Lipase family. In terms of assembly, interacts with SBP1. Widely expressed. Highly expressed in leaves and stems.

Its subcellular location is the plastid. It is found in the chloroplast. It catalyses the reaction 1,2-dihexadecanoyl-sn-glycero-3-phosphocholine + H2O = 2-hexadecanoyl-sn-glycero-3-phosphocholine + hexadecanoate + H(+). The catalysed reaction is a 1,2-diacyl-3-O-(beta-D-galactosyl)-sn-glycerol + H2O = an acyl-3-O-(beta-D-galactosyl)-sn-glycerol + a fatty acid + H(+). It carries out the reaction a 1,2-diacyl-3-O-[alpha-D-galactosyl-(1-&gt;6)-beta-D-galactosyl]-sn-glycerol + H2O = acyl-3-O-[alpha-D-galactosyl-(1-&gt;6)-beta-D-galactosyl]-sn-glycerol + a fatty acid + H(+). The enzyme catalyses a triacylglycerol + H2O = a diacylglycerol + a fatty acid + H(+). Its function is as follows. Acylhydrolase with broad specificity. Catalyzes the hydrolysis of phosphatidylcholine at the sn-1 position. Possesses moderate activity toward phosphatidylcholine (PC), monogalactosyldiacylglycerol (MGDG), digalactosyldiacylglycerol (DGDG) and triacylglycerol (TAG). This Arabidopsis thaliana (Mouse-ear cress) protein is Phospholipase A1-Igamma2, chloroplastic.